Consider the following 1223-residue polypeptide: Kinesin-like protein costa (1223 aa).

The 391-residue stretch at Pro-4–Val-394 folds into the Kinesin motor domain. The segment at Pro-13–Asn-90 is disordered. Basic and acidic residues predominate over residues Ala-39–Glu-62. Gly-178 to Thr-185 serves as a coordination point for ATP. 3 disordered regions span residues Arg-494–Arg-528, Lys-560–Pro-604, and Thr-625–Ala-646. Residues Gln-569–Thr-593 show a composition bias toward basic and acidic residues. 3 coiled-coil regions span residues Ala-658–Glu-743, Glu-773–Gly-825, and Asn-982–Leu-1015. The tract at residues Ser-774–Ile-799 is disordered. A compositionally biased stretch (basic and acidic residues) spans Glu-787–Ile-799. Residues Thr-1162 to Thr-1178 are compositionally biased toward low complexity. Positions Thr-1162 to Pro-1188 are disordered.

The protein belongs to the TRAFAC class myosin-kinesin ATPase superfamily. Kinesin family. KIF27 subfamily. As to quaternary structure, homodimer (Potential). Binds microtubules. Interacts with ci, smo, sgg, CkIalpha and protein kinase A catalytic subunit.

The protein resides in the cytoplasm. The protein localises to the cytoskeleton. In terms of biological role, regulates cubitus interruptus (ci) processing by recruiting multiple kinases to promote its efficient phosphorylation. Scaffolds multiple kinases and ci into proximity to promote its hyperphosphorylation, which then targets it for SCFSlimb/proteasome-mediated processing to generate its repressor form. Hh signaling inhibits ci phosphorylation by interfering with the cos-ci-kinases complex formation. The polypeptide is Kinesin-like protein costa (cos) (Drosophila pseudoobscura pseudoobscura (Fruit fly)).